The primary structure comprises 594 residues: Proteasome-associated ATPase (594 aa).

The span at 1–10 (MMETPNNDSS) shows a compositional bias: polar residues. Residues 1 to 23 (MMETPNNDSSRTPDEAAGAPDPE) are disordered. The stretch at 35 to 86 (ADRQVNILRDKLRHIDRQLAAATQNNSKLVGMLETAKAEILRLKNALDQEGQ) forms a coiled coil. Position 282-287 (282-287 (GCGKTL)) interacts with ATP. Residues 593–594 (YL) are docks into pockets in the proteasome alpha-ring.

The protein belongs to the AAA ATPase family. Homohexamer. Assembles into a hexameric ring structure that caps the 20S proteasome core. Strongly interacts with the prokaryotic ubiquitin-like protein Pup through a hydrophobic interface; the interacting region of ARC lies in its N-terminal coiled-coil domain. There is one Pup binding site per ARC hexamer ring. Upon ATP-binding, the C-terminus of ARC interacts with the alpha-rings of the proteasome core, possibly by binding to the intersubunit pockets.

Its pathway is protein degradation; proteasomal Pup-dependent pathway. Functionally, ATPase which is responsible for recognizing, binding, unfolding and translocation of pupylated proteins into the bacterial 20S proteasome core particle. May be essential for opening the gate of the 20S proteasome via an interaction with its C-terminus, thereby allowing substrate entry and access to the site of proteolysis. Thus, the C-termini of the proteasomal ATPase may function like a 'key in a lock' to induce gate opening and therefore regulate proteolysis. The protein is Proteasome-associated ATPase of Arthrobacter sp. (strain FB24).